We begin with the raw amino-acid sequence, 444 residues long: Glutamyl-tRNA reductase (444 aa).

Residues 49–52 (TCNR), serine 109, 114–116 (ETQ), and glutamine 120 each bind substrate. Catalysis depends on cysteine 50, which acts as the Nucleophile. 189-194 (GAGKMG) contributes to the NADP(+) binding site.

The protein belongs to the glutamyl-tRNA reductase family. As to quaternary structure, homodimer.

The catalysed reaction is (S)-4-amino-5-oxopentanoate + tRNA(Glu) + NADP(+) = L-glutamyl-tRNA(Glu) + NADPH + H(+). It functions in the pathway porphyrin-containing compound metabolism; protoporphyrin-IX biosynthesis; 5-aminolevulinate from L-glutamyl-tRNA(Glu): step 1/2. Catalyzes the NADPH-dependent reduction of glutamyl-tRNA(Glu) to glutamate 1-semialdehyde (GSA). The chain is Glutamyl-tRNA reductase from Bacillus cereus (strain ATCC 10987 / NRS 248).